We begin with the raw amino-acid sequence, 443 residues long: Glutamine synthetase (443 aa).

The GS beta-grasp domain occupies 16 to 97; the sequence is KRIKFVQLIF…VYGYIYKDGK (82 aa). Residues 103-443 enclose the GS catalytic domain; that stretch reads PRGVLRRTLE…EWELERYFFI (341 aa). The Mg(2+) site is built by Glu-126 and Glu-128. Residue Glu-176 participates in ATP binding. Residues Glu-181 and Glu-188 each coordinate Mg(2+). Gly-233 serves as a coordination point for L-glutamate. Mg(2+) is bound at residue His-237. Residues 239–241 and Ser-241 contribute to the ATP site; that span reads HIS. L-glutamate is bound by residues Arg-287, Glu-293, and Arg-305. Positions 305 and 310 each coordinate ATP. Glu-322 is a binding site for Mg(2+). Arg-324 is a binding site for L-glutamate.

It belongs to the glutamine synthetase family. Oligomer of 12 subunits arranged in the form of two hexagons. It depends on Mg(2+) as a cofactor.

It localises to the cytoplasm. It catalyses the reaction L-glutamate + NH4(+) + ATP = L-glutamine + ADP + phosphate + H(+). In terms of biological role, probably involved in nitrogen metabolism via ammonium assimilation. Catalyzes the ATP-dependent biosynthesis of glutamine from glutamate and ammonia. The sequence is that of Glutamine synthetase from Pyrococcus horikoshii (strain ATCC 700860 / DSM 12428 / JCM 9974 / NBRC 100139 / OT-3).